Here is a 140-residue protein sequence, read N- to C-terminus: Ribosome maturation factor RimP (140 aa).

It belongs to the RimP family.

The protein localises to the cytoplasm. Its function is as follows. Required for maturation of 30S ribosomal subunits. This Campylobacter jejuni subsp. jejuni serotype O:23/36 (strain 81-176) protein is Ribosome maturation factor RimP.